A 239-amino-acid chain; its full sequence is MNKNIVIKSMAALAILTSVTGINAAVVEETQQIANAEKNVTQVKDTNIFPYNGVVSFKDATGFVIGKNTIITNKHVSKDYKVGDRITAHPDGDKGNGGIYKIKSISDYPGDEDISVMNIEEQAVERGPKGFNFNENVQALNFAKDAKVDDKIKVIGYPLPAQNSFKQFESTGTIKRIKDNILNFDAYIEPGNSGSPVLNSNNEVIGVVYGGIGKIGSEYNGAVYFTPQIKDFIQKHIEQ.

An N-terminal signal peptide occupies residues 1 to 36 (MNKNIVIKSMAALAILTSVTGINAAVVEETQQIANA). Residues His75, Asp113, and Ser193 each act as charge relay system in the active site.

Belongs to the peptidase S1B family.

The protein localises to the secreted. This is Serine protease SplC (splC) from Staphylococcus aureus (strain MW2).